We begin with the raw amino-acid sequence, 302 residues long: uncharacterized protein (302 aa).

One can recognise an HTH lysR-type domain in the interval 1 to 60; it reads MRMNMSDFATFFAVARNQSFRAAGDELGLSSSAISHSIKTLEQRLKIRLFNRTTRSVSLT. The H-T-H motif DNA-binding region spans 20–40; that stretch reads FRAAGDELGLSSSAISHSIKT.

Belongs to the LysR transcriptional regulatory family.

This is an uncharacterized protein from Escherichia coli (strain K12).